A 184-amino-acid polypeptide reads, in one-letter code: Ras protein let-60 (184 aa).

Glycine 10 to serine 17 contacts GTP. The short motif at tyrosine 32 to tyrosine 40 is the Effector region element. Residues aspartate 57–glutamine 61 and asparagine 116–aspartate 119 contribute to the GTP site. The residue at position 181 (cysteine 181) is a Cysteine methyl ester. Cysteine 181 carries S-farnesyl cysteine lipidation. A propeptide spans glutamine 182–methionine 184 (removed in mature form).

Belongs to the small GTPase superfamily. Ras family. Interacts with soc-2. Interacts (in GTP-bound form) with plc-1 (via Ras-associating domain 1). In terms of tissue distribution, expressed in body wall muscles and in the nervous system including ganglion, nerve ring dorsal and ventral nerve cords, motor neurons and sensory tail neurons.

The protein resides in the cell membrane. The catalysed reaction is GTP + H2O = GDP + phosphate + H(+). GTP-binding protein with GTPase activity. The level of let-60 controls the switch between vulval and hypodermal cell fates during C.elegans vulval induction. May stimulate the guanine nucleotide exchange factor (GEF) activity of rap-1. May induce nuclear condensation. In Caenorhabditis elegans, this protein is Ras protein let-60.